The primary structure comprises 486 residues: Glutamyl-tRNA(Gln) amidotransferase subunit A (486 aa).

Catalysis depends on charge relay system residues Lys78 and Ser153. Residue Ser177 is the Acyl-ester intermediate of the active site.

The protein belongs to the amidase family. GatA subfamily. Heterotrimer of A, B and C subunits.

It catalyses the reaction L-glutamyl-tRNA(Gln) + L-glutamine + ATP + H2O = L-glutaminyl-tRNA(Gln) + L-glutamate + ADP + phosphate + H(+). Allows the formation of correctly charged Gln-tRNA(Gln) through the transamidation of misacylated Glu-tRNA(Gln) in organisms which lack glutaminyl-tRNA synthetase. The reaction takes place in the presence of glutamine and ATP through an activated gamma-phospho-Glu-tRNA(Gln). The polypeptide is Glutamyl-tRNA(Gln) amidotransferase subunit A (Syntrophobacter fumaroxidans (strain DSM 10017 / MPOB)).